A 130-amino-acid chain; its full sequence is Small ribosomal subunit protein uS8 (130 aa).

The protein belongs to the universal ribosomal protein uS8 family.

The protein localises to the cytoplasm. This Daucus carota (Wild carrot) protein is Small ribosomal subunit protein uS8 (RPS15A).